Consider the following 564-residue polypeptide: NAD-dependent malic enzyme (564 aa).

The Proton donor role is filled by Y102. Residue R155 coordinates NAD(+). The Proton acceptor role is filled by K173. The a divalent metal cation site is built by E244, D245, and D268. NAD(+)-binding residues include D268 and N417.

The protein belongs to the malic enzymes family. In terms of assembly, homotetramer. Requires Mg(2+) as cofactor. Mn(2+) is required as a cofactor.

It carries out the reaction (S)-malate + NAD(+) = pyruvate + CO2 + NADH. The enzyme catalyses oxaloacetate + H(+) = pyruvate + CO2. The chain is NAD-dependent malic enzyme from Pseudomonas aeruginosa (strain LESB58).